The sequence spans 360 residues: uncharacterized protein (360 aa).

A PNPLA domain is found at 19–179 (LALGSGGARG…LDPLPMAPIA (161 aa)). The short motif at 50–54 (GSSMG) is the GXSXG element. Ser52 serves as the catalytic Nucleophile. Asp166 serves as the catalytic Proton acceptor. The DGA/G signature appears at 166–168 (DGG). The interval 251–282 (DSWSQAPEIEQRPAGPPADREEAADTPGLPKM) is disordered.

Belongs to the NTE family.

This is an uncharacterized protein from Mycobacterium bovis (strain ATCC BAA-935 / AF2122/97).